The chain runs to 375 residues: 4-hydroxy-3-methylbut-2-en-1-yl diphosphate synthase (flavodoxin) (375 aa).

[4Fe-4S] cluster contacts are provided by cysteine 270, cysteine 273, cysteine 305, and glutamate 312.

Belongs to the IspG family. It depends on [4Fe-4S] cluster as a cofactor.

The catalysed reaction is (2E)-4-hydroxy-3-methylbut-2-enyl diphosphate + oxidized [flavodoxin] + H2O + 2 H(+) = 2-C-methyl-D-erythritol 2,4-cyclic diphosphate + reduced [flavodoxin]. The protein operates within isoprenoid biosynthesis; isopentenyl diphosphate biosynthesis via DXP pathway; isopentenyl diphosphate from 1-deoxy-D-xylulose 5-phosphate: step 5/6. In terms of biological role, converts 2C-methyl-D-erythritol 2,4-cyclodiphosphate (ME-2,4cPP) into 1-hydroxy-2-methyl-2-(E)-butenyl 4-diphosphate. This Shigella flexneri serotype 5b (strain 8401) protein is 4-hydroxy-3-methylbut-2-en-1-yl diphosphate synthase (flavodoxin).